The chain runs to 221 residues: Anti-sigma-W factor RsiW (221 aa).

At 1–87 (MKTCHSHDEL…AKWKLKAKRH (87 aa)) the chain is on the cytoplasmic side. Residues His30, Cys34, and Cys37 each contribute to the Zn(2+) site. A helical transmembrane segment spans residues 88 to 108 (PILVAAAIFLIMMSAAFFSAW). At 109–221 (SHTTDGIAVS…GEDDPHSTDN (113 aa)) the chain is on the extracellular side.

This sequence belongs to the zinc-associated anti-sigma factor (ZAS) superfamily. Anti-sigma-W factor family. It depends on Zn(2+) as a cofactor. Is processed by three successive proteolytic events. First, the extracellular region of RsiW is cleaved by PrsW (Site-1 cleavage) in response to cell envelope stresses. Next, it undergoes cleavage at an intramembrane site (Site-2 cleavage) mediated by RasP. This cleavage uncovers a cryptic proteolytic tag with conserved alanine residues in the transmembrane segment, that is recognized mainly by the ClpXP protease, which completely degrades the protein in the cytoplasm and leads to the induction of the sigma-W-controlled genes.

The protein localises to the membrane. Functionally, is the anti-sigma factor for SigW. The presence of RsiW leads to the inactivation of SigW, and its proteolytic destruction to sigma-W activation. The protein is Anti-sigma-W factor RsiW (rsiW) of Shouchella clausii (strain KSM-K16) (Alkalihalobacillus clausii).